A 376-amino-acid polypeptide reads, in one-letter code: Putative MSV199 domain-containing protein 468L (376 aa).

Positions 178 to 261 (QKREKETMSR…VNTVQKKLDI (84 aa)) form a coiled coil.

In Invertebrate iridescent virus 6 (IIV-6), this protein is Putative MSV199 domain-containing protein 468L.